A 500-amino-acid polypeptide reads, in one-letter code: 7-alpha-hydroxycholest-4-en-3-one 12-alpha-hydroxylase (500 aa).

Residues 4–24 (WCTVLGALLTVVGCLCLSLLL) form a helical membrane-spanning segment. The residue at position 325 (Ser325) is a Phosphoserine. Residue Cys439 participates in heme binding.

The protein belongs to the cytochrome P450 family. It depends on heme as a cofactor. Expressed in liver.

The protein localises to the endoplasmic reticulum membrane. Its subcellular location is the microsome membrane. The catalysed reaction is 7alpha-hydroxycholest-4-en-3-one + reduced [NADPH--hemoprotein reductase] + O2 = 7alpha,12alpha-dihydroxycholest-4-en-3-one + oxidized [NADPH--hemoprotein reductase] + H2O + H(+). It carries out the reaction 5beta-cholestane-3alpha,7alpha-diol + reduced [NADPH--hemoprotein reductase] + O2 = 5beta-cholestane-3alpha,7alpha,12alpha-triol + oxidized [NADPH--hemoprotein reductase] + H2O + H(+). It catalyses the reaction chenodeoxycholate + reduced [NADPH--hemoprotein reductase] + O2 = cholate + oxidized [NADPH--hemoprotein reductase] + H2O + H(+). It participates in lipid metabolism; bile acid biosynthesis. Functionally, a cytochrome P450 monooxygenase involved in primary bile acid biosynthesis. Catalyzes the 12alpha-hydroxylation of 7alpha-hydroxy-4-cholesten-3-one, an intermediate metabolite in cholic acid biosynthesis. Controls biliary balance of cholic acid and chenodeoxycholic acid, ultimately regulating the intestinal absorption of dietary lipids. Mechanistically, uses molecular oxygen inserting one oxygen atom into a substrate, and reducing the second into a water molecule, with two electrons provided by NADPH via cytochrome P450 reductase (CPR; NADPH--hemoprotein reductase). This is 7-alpha-hydroxycholest-4-en-3-one 12-alpha-hydroxylase (Cyp8b1) from Mus musculus (Mouse).